A 506-amino-acid polypeptide reads, in one-letter code: Phase 2 flagellin (506 aa).

It belongs to the bacterial flagellin family.

It is found in the secreted. Its subcellular location is the bacterial flagellum. Functionally, flagellin is the subunit protein which polymerizes to form the filaments of bacterial flagella. The protein is Phase 2 flagellin (fljB) of Salmonella typhimurium (strain LT2 / SGSC1412 / ATCC 700720).